We begin with the raw amino-acid sequence, 156 residues long: Small ribosomal subunit protein uS7 (156 aa).

It belongs to the universal ribosomal protein uS7 family. Part of the 30S ribosomal subunit. Contacts proteins S9 and S11.

In terms of biological role, one of the primary rRNA binding proteins, it binds directly to 16S rRNA where it nucleates assembly of the head domain of the 30S subunit. Is located at the subunit interface close to the decoding center, probably blocks exit of the E-site tRNA. In Streptococcus suis (strain 98HAH33), this protein is Small ribosomal subunit protein uS7.